Consider the following 608-residue polypeptide: UvrABC system protein C (608 aa).

The GIY-YIG domain maps to 16-94; sequence NRPGVYRMFD…IKEWRPPYNI (79 aa). The region spanning 204–239 is the UVR domain; sequence NALADELNTGMEQAAMRLDFEKAAELRDQVAILRRV.

It belongs to the UvrC family. Interacts with UvrB in an incision complex.

It localises to the cytoplasm. Its function is as follows. The UvrABC repair system catalyzes the recognition and processing of DNA lesions. UvrC both incises the 5' and 3' sides of the lesion. The N-terminal half is responsible for the 3' incision and the C-terminal half is responsible for the 5' incision. The sequence is that of UvrABC system protein C from Pseudomonas paraeruginosa (strain DSM 24068 / PA7) (Pseudomonas aeruginosa (strain PA7)).